The sequence spans 262 residues: Carboxy-S-adenosyl-L-methionine synthase (262 aa).

Residues Tyr-50, 84 to 86 (GCS), 137 to 138 (DI), Asn-152, and Arg-219 contribute to the S-adenosyl-L-methionine site.

It belongs to the class I-like SAM-binding methyltransferase superfamily. Cx-SAM synthase family. In terms of assembly, homodimer.

It carries out the reaction prephenate + S-adenosyl-L-methionine = carboxy-S-adenosyl-L-methionine + 3-phenylpyruvate + H2O. Its function is as follows. Catalyzes the conversion of S-adenosyl-L-methionine (SAM) to carboxy-S-adenosyl-L-methionine (Cx-SAM). The chain is Carboxy-S-adenosyl-L-methionine synthase from Psychrobacter arcticus (strain DSM 17307 / VKM B-2377 / 273-4).